A 129-amino-acid polypeptide reads, in one-letter code: Phosphoribosyl-AMP cyclohydrolase (129 aa).

Aspartate 77 contributes to the Mg(2+) binding site. A Zn(2+)-binding site is contributed by cysteine 78. The Mg(2+) site is built by aspartate 79 and aspartate 81. Positions 94 and 101 each coordinate Zn(2+).

The protein belongs to the PRA-CH family. In terms of assembly, homodimer. It depends on Mg(2+) as a cofactor. Zn(2+) serves as cofactor.

It localises to the cytoplasm. The catalysed reaction is 1-(5-phospho-beta-D-ribosyl)-5'-AMP + H2O = 1-(5-phospho-beta-D-ribosyl)-5-[(5-phospho-beta-D-ribosylamino)methylideneamino]imidazole-4-carboxamide. Its pathway is amino-acid biosynthesis; L-histidine biosynthesis; L-histidine from 5-phospho-alpha-D-ribose 1-diphosphate: step 3/9. Its function is as follows. Catalyzes the hydrolysis of the adenine ring of phosphoribosyl-AMP. The protein is Phosphoribosyl-AMP cyclohydrolase of Methanosphaera stadtmanae (strain ATCC 43021 / DSM 3091 / JCM 11832 / MCB-3).